The sequence spans 625 residues: Chaperone protein HtpG (625 aa).

The interval 1-332 (MSNKQNTAVQ…TEDLSLNVSR (332 aa)) is a; substrate-binding. The interval 333 to 545 (EIVQSSPVMS…KDAMDSQMER (213 aa)) is b. Residues 546-625 (MMKMMQQEMP…ELIEAATLSR (80 aa)) are c.

This sequence belongs to the heat shock protein 90 family. As to quaternary structure, homodimer.

It localises to the cytoplasm. Molecular chaperone. Has ATPase activity. This chain is Chaperone protein HtpG, found in Chlorobium luteolum (strain DSM 273 / BCRC 81028 / 2530) (Pelodictyon luteolum).